The primary structure comprises 650 residues: Vitrin (650 aa).

The signal sequence occupies residues 1–26; that stretch reads MGIVVPTMKASVIEVLLVLLVTGIHS. Residues 40–133 form the LCCL domain; that stretch reads TVPQINCDVK…LSLPRWRESF (94 aa). 2 cysteine pairs are disulfide-bonded: Cys46–Cys62 and Cys66–Cys86. The segment at 198–226 is disordered; sequence RSTSKPFAASVTNSPRPQPVGHRSQEMEE. VWFA domains follow at residues 265 to 450 and 467 to 640; these read DLSF…VKRV and DIGF…IQNI. Residue Asn492 is glycosylated (N-linked (GlcNAc...) asparagine).

In terms of assembly, binds dermatan sulfate and chondroitin sulfate.

Its subcellular location is the secreted. The protein localises to the extracellular space. It localises to the extracellular matrix. Its function is as follows. Promotes matrix assembly and cell adhesiveness. Plays a role in spinal cord formation by regulating the proliferation and differentiation of neural stem cells. This chain is Vitrin (Vit), found in Mus musculus (Mouse).